Consider the following 415-residue polypeptide: Putative competence-damage inducible protein (415 aa).

It belongs to the CinA family.

This chain is Putative competence-damage inducible protein, found in Listeria welshimeri serovar 6b (strain ATCC 35897 / DSM 20650 / CCUG 15529 / CIP 8149 / NCTC 11857 / SLCC 5334 / V8).